The sequence spans 398 residues: Cytochrome b (398 aa).

4 helical membrane-spanning segments follow: residues 33 to 53, 77 to 98, 113 to 133, and 178 to 198; these read FGSL…FLAM, WLIR…YLHI, WNIG…GYVL, and FFAF…IHLL. Residues H83 and H97 each contribute to the heme b site. Positions 182 and 196 each coordinate heme b. An a ubiquinone-binding site is contributed by H201. 4 helical membrane passes run 226 to 246, 288 to 308, 320 to 340, and 347 to 367; these read YKDL…SLFA, LGGV…PILH, FTQL…WIGG, and YVVI…FLIP.

The protein belongs to the cytochrome b family. As to quaternary structure, the cytochrome bc1 complex contains 3 respiratory subunits (MT-CYB, CYC1 and UQCRFS1), 2 core proteins (UQCRC1 and UQCRC2) and probably 6 low-molecular weight proteins. The cofactor is heme b.

It localises to the mitochondrion inner membrane. In terms of biological role, component of the ubiquinol-cytochrome c reductase complex (complex III or cytochrome b-c1 complex) that is part of the mitochondrial respiratory chain. The b-c1 complex mediates electron transfer from ubiquinol to cytochrome c. Contributes to the generation of a proton gradient across the mitochondrial membrane that is then used for ATP synthesis. The sequence is that of Cytochrome b (mt-cyb) from Channa asiatica (Small snakehead).